The following is a 258-amino-acid chain: NAD kinase (258 aa).

Catalysis depends on aspartate 45, which acts as the Proton acceptor. Residues aspartate 45–glycine 46, asparagine 117–glutamate 118, aspartate 147, alanine 155, threonine 158–serine 163, and alanine 182 contribute to the NAD(+) site.

The protein belongs to the NAD kinase family. It depends on a divalent metal cation as a cofactor.

The protein localises to the cytoplasm. The enzyme catalyses NAD(+) + ATP = ADP + NADP(+) + H(+). In terms of biological role, involved in the regulation of the intracellular balance of NAD and NADP, and is a key enzyme in the biosynthesis of NADP. Catalyzes specifically the phosphorylation on 2'-hydroxyl of the adenosine moiety of NAD to yield NADP. The chain is NAD kinase from Xanthomonas campestris pv. campestris (strain 8004).